We begin with the raw amino-acid sequence, 172 residues long: C-phycocyanin-2 beta subunit (172 aa).

N4-methylasparagine is present on asparagine 72. Cysteine 82 and cysteine 153 together coordinate (2R,3E)-phycocyanobilin.

It belongs to the phycobiliprotein family. Heterodimer of an alpha and a beta subunit, which further assembles into trimers and the trimers into hexamers. Post-translationally, contains two covalently linked bilin chromophores.

Its subcellular location is the cellular thylakoid membrane. Light-harvesting photosynthetic bile pigment-protein from the phycobiliprotein complex (phycobilisome, PBS). Phycocyanin is the major phycobiliprotein in the PBS rod. This is C-phycocyanin-2 beta subunit (cpcB2) from Microchaete diplosiphon (Fremyella diplosiphon).